The following is an 85-amino-acid chain: Translational regulator CsrA (85 aa).

This sequence belongs to the CsrA/RsmA family. Homodimer; the beta-strands of each monomer intercalate to form a hydrophobic core, while the alpha-helices form wings that extend away from the core.

It is found in the cytoplasm. Functionally, a translational regulator that binds mRNA to regulate translation initiation and/or mRNA stability. Usually binds in the 5'-UTR at or near the Shine-Dalgarno sequence preventing ribosome-binding, thus repressing translation. Its main target seems to be the major flagellin gene, while its function is anatagonized by FliW. The sequence is that of Translational regulator CsrA from Leifsonia xyli subsp. xyli (strain CTCB07).